Here is a 509-residue protein sequence, read N- to C-terminus: Steroid 17-alpha-hydroxylase/17,20 lyase (509 aa).

A substrate-binding site is contributed by Asn-202. Cys-442 is a binding site for heme.

This sequence belongs to the cytochrome P450 family. Requires heme as cofactor.

It is found in the endoplasmic reticulum membrane. It localises to the microsome membrane. The catalysed reaction is a C21-steroid + reduced [NADPH--hemoprotein reductase] + O2 = a 17alpha-hydroxy-C21-steroid + oxidized [NADPH--hemoprotein reductase] + H2O + H(+). It carries out the reaction progesterone + reduced [NADPH--hemoprotein reductase] + O2 = 17alpha-hydroxyprogesterone + oxidized [NADPH--hemoprotein reductase] + H2O + H(+). It catalyses the reaction pregnenolone + reduced [NADPH--hemoprotein reductase] + O2 = 17alpha-hydroxypregnenolone + oxidized [NADPH--hemoprotein reductase] + H2O + H(+). The enzyme catalyses 17alpha-hydroxyprogesterone + reduced [NADPH--hemoprotein reductase] + O2 = androst-4-ene-3,17-dione + acetate + oxidized [NADPH--hemoprotein reductase] + H2O + 2 H(+). The catalysed reaction is 17alpha-hydroxyprogesterone + reduced [NADPH--hemoprotein reductase] + O2 = 16alpha,17alpha-dihydroxyprogesterone + oxidized [NADPH--hemoprotein reductase] + H2O + H(+). It carries out the reaction 16alpha,17alpha-dihydroxyprogesterone + reduced [NADPH--hemoprotein reductase] + O2 = 6beta,16alpha,17alpha-trihydroxyprogesterone + oxidized [NADPH--hemoprotein reductase] + H2O + H(+). It catalyses the reaction 17alpha-hydroxypregnenolone + reduced [NADPH--hemoprotein reductase] + O2 = 3beta-hydroxyandrost-5-en-17-one + acetate + oxidized [NADPH--hemoprotein reductase] + H2O + 2 H(+). The enzyme catalyses 16alpha,17alpha-dihydroxypregnenolone + reduced [NADPH--hemoprotein reductase] + O2 = 3beta,16alpha-dihydroxy-androst-5-en-17-one + acetate + oxidized [NADPH--hemoprotein reductase] + H2O + 2 H(+). The catalysed reaction is 3beta-hydroxyandrost-5-en-17-one + reduced [NADPH--hemoprotein reductase] + O2 = 3beta,16alpha-dihydroxy-androst-5-en-17-one + oxidized [NADPH--hemoprotein reductase] + H2O + H(+). It carries out the reaction androst-4-ene-3,17-dione + reduced [NADPH--hemoprotein reductase] + O2 = 16alpha-hydroxyandrost-4-ene-3,17-dione + oxidized [NADPH--hemoprotein reductase] + H2O + H(+). It participates in steroid hormone biosynthesis. It functions in the pathway steroid biosynthesis; glucocorticoid biosynthesis. With respect to regulation, regulated predominantly by intracellular cAMP levels. The 17,20-lyase activity is stimulated by cytochrome b5, which acts as an allosteric effector increasing the Vmax of the lyase activity. Its function is as follows. A cytochrome P450 monooxygenase involved in corticoid and androgen biosynthesis. Catalyzes 17-alpha hydroxylation of C21 steroids, which is common for both pathways. A second oxidative step, required only for androgen synthesis, involves an acyl-carbon cleavage. The 17-alpha hydroxy intermediates, as part of adrenal glucocorticoids biosynthesis pathway, are precursors of cortisol. Hydroxylates steroid hormones, pregnenolone and progesterone to form 17-alpha hydroxy metabolites, followed by the cleavage of the C17-C20 bond to form C19 steroids, dehydroepiandrosterone (DHEA) and androstenedione. Has 16-alpha hydroxylase activity. Catalyzes 16-alpha hydroxylation of 17-alpha hydroxy pregnenolone, followed by the cleavage of the C17-C20 bond to form 16-alpha-hydroxy DHEA. Also 16-alpha hydroxylates androgens, relevant for estriol synthesis. Mechanistically, uses molecular oxygen inserting one oxygen atom into a substrate, and reducing the second into a water molecule, with two electrons provided by NADPH via cytochrome P450 reductase (CPR; NADPH-ferrihemoprotein reductase). In Capra hircus (Goat), this protein is Steroid 17-alpha-hydroxylase/17,20 lyase (CYP17A1).